Reading from the N-terminus, the 224-residue chain is 3-dehydroquinate dehydratase (224 aa).

Residues 30-32 (EWR) and Arg62 each bind 3-dehydroquinate. His118 functions as the Proton donor/acceptor in the catalytic mechanism. Lys143 serves as the catalytic Schiff-base intermediate with substrate. The 3-dehydroquinate site is built by Arg186, Ser205, and Gln209.

It belongs to the type-I 3-dehydroquinase family. As to quaternary structure, homodimer.

The enzyme catalyses 3-dehydroquinate = 3-dehydroshikimate + H2O. Its pathway is metabolic intermediate biosynthesis; chorismate biosynthesis; chorismate from D-erythrose 4-phosphate and phosphoenolpyruvate: step 3/7. In terms of biological role, involved in the third step of the chorismate pathway, which leads to the biosynthesis of aromatic amino acids. Catalyzes the cis-dehydration of 3-dehydroquinate (DHQ) and introduces the first double bond of the aromatic ring to yield 3-dehydroshikimate. The chain is 3-dehydroquinate dehydratase from Streptococcus suis (strain 98HAH33).